We begin with the raw amino-acid sequence, 154 residues long: Myoglobin (154 aa).

The Globin domain maps to 2–148; that stretch reads GLSDGEWQLV…FRKDMASNYK (147 aa). Ser4 bears the Phosphoserine mark. A nitrite-binding site is contributed by His65. His65 is a binding site for O2. Phosphothreonine is present on Thr68. His94 is a binding site for heme b.

The protein belongs to the globin family. In terms of assembly, monomeric.

The protein resides in the cytoplasm. It is found in the sarcoplasm. The catalysed reaction is Fe(III)-heme b-[protein] + nitric oxide + H2O = Fe(II)-heme b-[protein] + nitrite + 2 H(+). It carries out the reaction H2O2 + AH2 = A + 2 H2O. Functionally, monomeric heme protein which primary function is to store oxygen and facilitate its diffusion within muscle tissues. Reversibly binds oxygen through a pentacoordinated heme iron and enables its timely and efficient release as needed during periods of heightened demand. Depending on the oxidative conditions of tissues and cells, and in addition to its ability to bind oxygen, it also has a nitrite reductase activity whereby it regulates the production of bioactive nitric oxide. Under stress conditions, like hypoxia and anoxia, it also protects cells against reactive oxygen species thanks to its pseudoperoxidase activity. This is Myoglobin (MB) from Hylobates agilis (Agile gibbon).